A 238-amino-acid polypeptide reads, in one-letter code: Probable transcriptional regulatory protein YeeN (238 aa).

It belongs to the TACO1 family. YeeN subfamily.

It localises to the cytoplasm. The sequence is that of Probable transcriptional regulatory protein YeeN from Shigella sonnei (strain Ss046).